The sequence spans 212 residues: ER lumen protein-retaining receptor 2 (212 aa).

Over 1-4 (MNIF) the chain is Lumenal. A helical membrane pass occupies residues 5-24 (RLTGDLSHLAAIIILLLKIW). Topologically, residues 25 to 32 (KSRSCAGI) are cytoplasmic. A helical membrane pass occupies residues 33–52 (SGKSQLLFALVFTTRYLDLF). The interaction with the K-D-E-L motif on target proteins stretch occupies residues 47-48 (RY). The Lumenal portion of the chain corresponds to 53–58 (TSFISL). Residues 59–79 (YNTSMKLIYIACSYATVYLIY) form a helical membrane-spanning segment. The Cytoplasmic portion of the chain corresponds to 80-92 (MKFKATYDGNHDT). Residues 93–110 (FRVEFLIVPVGGLSFLVN) traverse the membrane as a helical segment. Residues 111 to 116 (HDFSPL) lie on the Lumenal side of the membrane. A helical transmembrane segment spans residues 117-135 (EILWTFSIYLESVAILPQL). Topologically, residues 136-149 (FMISKTGEAETITT) are cytoplasmic. The chain crosses the membrane as a helical span at residues 150-168 (HYLFFLGLYRALYLVNWIW). The segment at 159–169 (RALYLVNWIWR) is interaction with the K-D-E-L motif on target proteins. The Lumenal portion of the chain corresponds to 169 to 178 (RYYFEGFFDL). Residues 179-199 (IAVVAGVVQTVLYCDFFYLYV) traverse the membrane as a helical segment. Over 200–212 (TKVLKGKKLSLPA) the chain is Cytoplasmic. The tract at residues 204-207 (KGKK) is important for recycling of cargo proteins with the sequence motif K-D-E-L from the Golgi to the endoplasmic reticulum.

This sequence belongs to the ERD2 family.

Its subcellular location is the endoplasmic reticulum membrane. The protein resides in the golgi apparatus membrane. It is found in the cytoplasmic vesicle. The protein localises to the COPI-coated vesicle membrane. Membrane receptor that binds the K-D-E-L sequence motif in the C-terminal part of endoplasmic reticulum resident proteins and maintains their localization in that compartment by participating to their vesicle-mediated recycling back from the Golgi. Binding is pH dependent, and is optimal at pH 5-5.4. This is ER lumen protein-retaining receptor 2 (KDELR2) from Gallus gallus (Chicken).